We begin with the raw amino-acid sequence, 1292 residues long: ABC multidrug transporter MDR5 (1292 aa).

The segment at 1 to 43 (MTEEPKPVTPVLRDGEAGLDTTAPTEAGSLGEEAPKKEADGIV) is disordered. A run of 2 helical transmembrane segments spans residues 79-99 (ICGF…TIIF) and 128-148 (LWFV…TICF). Residues 81–370 (GFFAAVASGT…IAPTLGEFTK (290 aa)) form the ABC transmembrane type-1 1 domain. The N-linked (GlcNAc...) asparagine glycan is linked to Asn149. 4 consecutive transmembrane segments (helical) span residues 202-222 (VGTC…AFTQ), 226-246 (LTLP…ITVA), 314-334 (EFFI…KLLL), and 344-364 (ILTV…IAPT). Positions 405-650 (LELSNAVFSY…KGQYWSLVNA (246 aa)) constitute an ABC transporter 1 domain. 440–447 (GASGSGKS) contributes to the ATP binding site. N-linked (GlcNAc...) asparagine glycosylation is present at Asn494. Residues 656-691 (ASDDSSSDTDKETDTQPAEILEKHATTKSTHSKVPH) form a disordered region. The span at 663–680 (DTDKETDTQPAEILEKHA) shows a compositional bias: basic and acidic residues. Transmembrane regions (helical) follow at residues 720 to 740 (HWLF…AFPA) and 768 to 788 (LMFF…GFFL). The ABC transmembrane type-1 2 domain occupies 725-1012 (LLGGIASVVS…IFGFTMNTTK (288 aa)). Asn820 carries N-linked (GlcNAc...) asparagine glycosylation. 4 consecutive transmembrane segments (helical) span residues 844 to 864 (IGLI…ALVT), 866 to 886 (WKLA…AGFI), 949 to 969 (IAMI…ALAF), and 986 to 1006 (FFVI…IFGF). N-linked (GlcNAc...) asparagine glycosylation is found at Asn1009, Asn1031, and Asn1052. The ABC transporter 2 domain occupies 1048–1285 (VEFRNVSFSY…KGRYFEMCKA (238 aa)). Position 1083–1090 (1083–1090 (GPSGCGKT)) interacts with ATP.

It belongs to the ABC transporter superfamily. ABCB family. Multidrug resistance exporter (TC 3.A.1.201) subfamily.

The protein localises to the cell membrane. It carries out the reaction itraconazole(in) + ATP + H2O = itraconazole(out) + ADP + phosphate + H(+). Functionally, pleiotropic ABC efflux transporter involved in the modulation susceptibility to itraconazole. The polypeptide is ABC multidrug transporter MDR5 (Trichophyton rubrum (strain ATCC MYA-4607 / CBS 118892) (Athlete's foot fungus)).